We begin with the raw amino-acid sequence, 546 residues long: Chaperonin GroEL (546 aa).

ATP contacts are provided by residues 30-33, lysine 51, 87-91, glycine 415, 479-481, and aspartate 495; these read TLGP, DGTTT, and NAA. Positions 526–546 are disordered; it reads KKDEPAMPAGGGMGGMGGMDF. Residues 534-546 are compositionally biased toward gly residues; that stretch reads AGGGMGGMGGMDF.

The protein belongs to the chaperonin (HSP60) family. As to quaternary structure, forms a cylinder of 14 subunits composed of two heptameric rings stacked back-to-back. Interacts with the co-chaperonin GroES.

Its subcellular location is the cytoplasm. It catalyses the reaction ATP + H2O + a folded polypeptide = ADP + phosphate + an unfolded polypeptide.. Together with its co-chaperonin GroES, plays an essential role in assisting protein folding. The GroEL-GroES system forms a nano-cage that allows encapsulation of the non-native substrate proteins and provides a physical environment optimized to promote and accelerate protein folding. The protein is Chaperonin GroEL of Xanthomonas oryzae pv. oryzae (strain MAFF 311018).